Reading from the N-terminus, the 348-residue chain is Elongation factor Ts (348 aa).

Positions 82-85 (TDFV) are involved in Mg(2+) ion dislocation from EF-Tu.

This sequence belongs to the EF-Ts family.

The protein resides in the cytoplasm. Associates with the EF-Tu.GDP complex and induces the exchange of GDP to GTP. It remains bound to the aminoacyl-tRNA.EF-Tu.GTP complex up to the GTP hydrolysis stage on the ribosome. The polypeptide is Elongation factor Ts (Aliarcobacter butzleri (strain RM4018) (Arcobacter butzleri)).